A 286-amino-acid chain; its full sequence is 3-hydroxyanthranilate 3,4-dioxygenase (286 aa).

Residues 1–160 (MERRVRVKSW…SEQYRTGKPN (160 aa)) are domain A (catalytic). Arg43 contributes to the O2 binding site. Residues His47, Glu53, and His91 each coordinate Fe cation. Glu53 contributes to the substrate binding site. Residues Arg95 and Glu105 each contribute to the substrate site. The segment at 161–177 (PDQLLKELPFPLNTRSI) is linker. Residues 178–286 (MKPMSLKAWL…QDPARKKPWW (109 aa)) form a domain B region.

Belongs to the 3-HAO family. Monomer. Requires Fe(2+) as cofactor.

It is found in the cytoplasm. The protein localises to the cytosol. The catalysed reaction is 3-hydroxyanthranilate + O2 = (2Z,4Z)-2-amino-3-carboxymuconate 6-semialdehyde. It functions in the pathway cofactor biosynthesis; NAD(+) biosynthesis; quinolinate from L-kynurenine: step 3/3. In terms of biological role, catalyzes the oxidative ring opening of 3-hydroxyanthranilate to 2-amino-3-carboxymuconate semialdehyde, which spontaneously cyclizes to quinolinate. This chain is 3-hydroxyanthranilate 3,4-dioxygenase (Haao), found in Mus musculus (Mouse).